The primary structure comprises 317 residues: Melanocyte-stimulating hormone receptor (317 aa).

Residues 1–20 (MPVQGSQRSLLGAVNSTPTA) show a composition bias toward polar residues. The interval 1-23 (MPVQGSQRSLLGAVNSTPTATPH) is disordered. Over 1-37 (MPVQGSQRSLLGAVNSTPTATPHLRPAANQTGPQCLE) the chain is Extracellular. N29 is a glycosylation site (N-linked (GlcNAc...) asparagine). A helical transmembrane segment spans residues 38–63 (VSIPDGLFLCLGLVSLVENTLVVAAI). Over 64–72 (AKNRNLHSP) the chain is Cytoplasmic. The chain crosses the membrane as a helical span at residues 73-93 (MYCFICCLALSDLLVSVSSVL). Residues 94-118 (ETAVLLLLGAGALAAQATVVQQLGN) lie on the Extracellular side of the membrane. Residues 119–140 (VIDVLLCSSMVSSLFFLGAIAM) traverse the membrane as a helical segment. Topologically, residues 141–163 (DRYISIFYALRYHSIVTLARARR) are cytoplasmic. Residues 164–183 (AIAAIWAASILSSTLFIAYC) form a helical membrane-spanning segment. Residues 184 to 191 (DRTAALLC) are Extracellular-facing. A helical membrane pass occupies residues 192 to 211 (LVVFFLAMLVLMAVLYVHML). At 212–240 (TQARQHAQGIARLHKRQRPVQQGWGLKGA) the chain is on the cytoplasmic side. Residues 241-266 (ATLTILLGVFFLCWGPFFLHLTLIAV) form a helical membrane-spanning segment. Residues 267–279 (CPQHPTCSCIFKN) are Extracellular-facing. Residues 280-300 (FRLFLALIVCNAIVDPLIYAF) traverse the membrane as a helical segment. The Cytoplasmic segment spans residues 301 to 317 (RSQELRKTLKEVLLFFW).

The protein belongs to the G-protein coupled receptor 1 family. Interacts with MGRN1, but does not undergo MGRN1-mediated ubiquitination; this interaction competes with GNAS-binding and thus inhibits agonist-induced cAMP production. Interacts with OPN3; the interaction results in a decrease in MC1R-mediated cAMP signaling and ultimately a decrease in melanin production in melanocytes.

The protein localises to the cell membrane. Functionally, receptor for MSH (alpha, beta and gamma) and ACTH. The activity of this receptor is mediated by G proteins which activate adenylate cyclase. Mediates melanogenesis, the production of eumelanin (black/brown) and phaeomelanin (red/yellow), via regulation of cAMP signaling in melanocytes. The chain is Melanocyte-stimulating hormone receptor (MC1R) from Lemur catta (Ring-tailed lemur).